Reading from the N-terminus, the 141-residue chain is Large ribosomal subunit protein uL11 (141 aa).

The protein belongs to the universal ribosomal protein uL11 family. As to quaternary structure, part of the ribosomal stalk of the 50S ribosomal subunit. Interacts with L10 and the large rRNA to form the base of the stalk. L10 forms an elongated spine to which L12 dimers bind in a sequential fashion forming a multimeric L10(L12)X complex. One or more lysine residues are methylated.

In terms of biological role, forms part of the ribosomal stalk which helps the ribosome interact with GTP-bound translation factors. The polypeptide is Large ribosomal subunit protein uL11 (Opitutus terrae (strain DSM 11246 / JCM 15787 / PB90-1)).